Reading from the N-terminus, the 548-residue chain is Membrane protein insertase YidC (548 aa).

Residues 6–26 (NLLVIALLFVSFMIWQAWEQD) traverse the membrane as a helical segment. Positions 28-55 (NPQPQAQQTTQTTTTAAGSAADQGVPAS) are disordered. Over residues 30–50 (QPQAQQTTQTTTTAAGSAADQ) the composition is skewed to low complexity. 4 helical membrane passes run 350–370 (FVGN…GIMY), 420–440 (LGGC…YYML), 458–478 (LSAQ…MFFI), and 499–519 (PVIF…YYIV).

It belongs to the OXA1/ALB3/YidC family. Type 1 subfamily. Interacts with the Sec translocase complex via SecD. Specifically interacts with transmembrane segments of nascent integral membrane proteins during membrane integration.

Its subcellular location is the cell inner membrane. Its function is as follows. Required for the insertion and/or proper folding and/or complex formation of integral membrane proteins into the membrane. Involved in integration of membrane proteins that insert both dependently and independently of the Sec translocase complex, as well as at least some lipoproteins. Aids folding of multispanning membrane proteins. The chain is Membrane protein insertase YidC from Shigella boydii serotype 18 (strain CDC 3083-94 / BS512).